Reading from the N-terminus, the 145-residue chain is DnaJ homolog subfamily B member 3 (145 aa).

The 69-residue stretch at 1–69 (MVDYYEVLDV…KKRDIYDRYG (69 aa)) folds into the J domain.

In terms of tissue distribution, expressed in sperm (at protein level).

In terms of biological role, may operate as a co-chaperone of the male germ cell- and haploid stage-specific Hsp70 proteins. This chain is DnaJ homolog subfamily B member 3 (DNAJB3), found in Homo sapiens (Human).